The primary structure comprises 471 residues: Glutamate--tRNA ligase (471 aa).

The 'HIGH' region motif lies at Pro9–Gly19. Zn(2+) is bound by residues Cys98, Cys100, Cys125, and His127. The short motif at Lys237–Arg241 is the 'KMSKS' region element. Residue Lys240 participates in ATP binding.

This sequence belongs to the class-I aminoacyl-tRNA synthetase family. Glutamate--tRNA ligase type 1 subfamily. Monomer. Zn(2+) serves as cofactor.

It is found in the cytoplasm. It catalyses the reaction tRNA(Glu) + L-glutamate + ATP = L-glutamyl-tRNA(Glu) + AMP + diphosphate. Catalyzes the attachment of glutamate to tRNA(Glu) in a two-step reaction: glutamate is first activated by ATP to form Glu-AMP and then transferred to the acceptor end of tRNA(Glu). This is Glutamate--tRNA ligase from Shigella boydii serotype 4 (strain Sb227).